The primary structure comprises 145 residues: I-leader protein (145 aa).

It localises to the host cytoplasm. The protein resides in the host perinuclear region. The polypeptide is I-leader protein (Human adenovirus C serotype 2 (HAdV-2)).